Here is a 792-residue protein sequence, read N- to C-terminus: Kinesin-like protein KIFC2 (792 aa).

Disordered regions lie at residues alanine 22–proline 45 and glutamine 142–glutamine 184. Over residues glutamine 142 to threonine 169 the composition is skewed to polar residues. A coiled-coil region spans residues leucine 186 to cysteine 347. Residues asparagine 409–valine 732 enclose the Kinesin motor domain. Glycine 486–threonine 493 is an ATP binding site. Residues leucine 734–proline 792 form a disordered region. Residues arginine 744 to proline 764 are compositionally biased toward low complexity. The span at threonine 765 to threonine 774 shows a compositional bias: pro residues.

It belongs to the TRAFAC class myosin-kinesin ATPase superfamily. Kinesin family. As to expression, present in axons and dendrites of neurons in the central and peripheral nervous systems.

It localises to the cytoplasm. Its subcellular location is the cytoskeleton. Functionally, may play a role in microtubule-dependent retrograde axonal transport. May function as the motor for the transport of multivesicular body (MVB)-like organelles in dendrites. The sequence is that of Kinesin-like protein KIFC2 (Kifc2) from Mus musculus (Mouse).